The primary structure comprises 255 residues: Taurine import ATP-binding protein TauB (255 aa).

Residues 2–229 (LQISHLYADY…RFVAGESSRS (228 aa)) enclose the ABC transporter domain. 34–41 (GPSGCGKT) is a binding site for ATP.

Belongs to the ABC transporter superfamily. Taurine importer (TC 3.A.1.17.1) family. The complex is composed of two ATP-binding proteins (TauB), two transmembrane proteins (TauC) and a solute-binding protein (TauA).

It is found in the cell inner membrane. The catalysed reaction is taurine(out) + ATP + H2O = taurine(in) + ADP + phosphate + H(+). In terms of biological role, part of the ABC transporter complex TauABC involved in taurine import. Responsible for energy coupling to the transport system. This is Taurine import ATP-binding protein TauB from Shigella flexneri.